We begin with the raw amino-acid sequence, 1167 residues long: mRNA 3'-end-processing protein rna-14 (1167 aa).

The tract at residues 1 to 245 (MSDDYDPTNI…DPTPVTQPAP (245 aa)) is disordered. Acidic residues-rich tracts occupy residues 16 to 26 (EEQEDYGEADG) and 70 to 79 (NTDDVGDDYD). Low complexity predominate over residues 102-111 (TAPQPAAPVA). Acidic residues predominate over residues 124 to 137 (DSDDEDEDGDDDGE). 2 stretches are compositionally biased toward low complexity: residues 138 to 150 (PQQQ…QQQP) and 159 to 191 (GSGA…PQTA). The segment covering 192 to 218 (TLTVQDNAGATTFNAPPVPQQVSHQSG) has biased composition (polar residues). Residues 219–245 (ATTAAVPTTPSSAAPAVDPTPVTQPAP) are compositionally biased toward low complexity. 6 HAT repeats span residues 277–309 (NDID…LELS), 311–342 (NNFP…YIRR), 352–387 (QARQ…FIKF), 401–434 (QKMD…FEMG), 471–504 (TNLP…WEKS), and 518–550 (LYQK…WCFD). Over residues 882-893 (QQQPQLPMSQRD) the composition is skewed to polar residues. Disordered stretches follow at residues 882 to 980 (QQQP…SGAG) and 1075 to 1167 (AYRE…PPPY). Positions 908-922 (SPSAGPGAPFAPYAA) are enriched in low complexity. Residues 924-946 (RPLDDRDYDDHPRKIARSEHDPF) are compositionally biased toward basic and acidic residues. Gly residues predominate over residues 969–979 (GAAGAYSGSGA). The segment covering 1079–1090 (SPGPLGGRPLSP) has biased composition (low complexity). The segment covering 1121 to 1134 (EPPPAAQYGVPPPA) has biased composition (pro residues). Over residues 1135–1151 (QYDGGWAQQQQQQQYGQ) the composition is skewed to low complexity.

It is found in the nucleus. The protein resides in the cytoplasm. Its function is as follows. Component of the cleavage factor IA (CFIA) complex, which is involved in the endonucleolytic cleavage during polyadenylation-dependent pre-mRNA 3'-end formation. In Neurospora crassa (strain ATCC 24698 / 74-OR23-1A / CBS 708.71 / DSM 1257 / FGSC 987), this protein is mRNA 3'-end-processing protein rna-14 (rna-14).